A 318-amino-acid polypeptide reads, in one-letter code: ADP-ribosyl cyclase/cyclic ADP-ribose hydrolase 2 (318 aa).

Positions 1–32 (MAAQGCAASRLLQLLLQLLLLLLLLAAGGARA) are cleaved as a signal peptide. 3 cysteine pairs are disulfide-bonded: Cys51-Cys67, Cys83-Cys163, and Cys144-Cys157. Residues Asn66 and Asn95 are each glycosylated (N-linked (GlcNAc...) asparagine). NAD(+) is bound at residue Trp109. Trp109 contributes to the nicotinamide binding site. The N-linked (GlcNAc...) asparagine glycan is linked to Asn148. Trp172 provides a ligand contact to NAD(+). Asn192 carries an N-linked (GlcNAc...) asparagine glycan. Residue Glu210 coordinates NAD(+). Intrachain disulfides connect Cys238/Cys259 and Cys271/Cys280. Ala293 carries GPI-anchor amidated alanine lipidation. The propeptide at 294-318 (PSLYTEQRAGLIIPLFLVLASRTQL) is removed in mature form.

Belongs to the ADP-ribosyl cyclase family. Homodimer. In terms of tissue distribution, expressed in various tissues including placenta, lung, liver and kidney.

Its subcellular location is the cell membrane. It carries out the reaction NAD(+) + H2O = ADP-D-ribose + nicotinamide + H(+). It catalyses the reaction NAD(+) = cyclic ADP-beta-D-ribose + nicotinamide + H(+). The catalysed reaction is cyclic ADP-beta-D-ribose + H2O = ADP-D-ribose. ADP-ribosyl cyclase and cADPR hydrolase activities are both activated by Zn(2+) or Mn(2+), and inhibited by Cu(2+), while Mg(2+) and Ca(2+) do not have any significant influence. Functionally, catalyzes both the synthesis of cyclic ADP-beta-D-ribose (cADPR) from NAD(+), and its hydrolysis to ADP-D-ribose (ADPR). Cyclic ADPR is known to serve as an endogenous second messenger that elicits calcium release from intracellular stores, and thus regulates the mobilization of intracellular calcium. May be involved in pre-B-cell growth. The chain is ADP-ribosyl cyclase/cyclic ADP-ribose hydrolase 2 (BST1) from Homo sapiens (Human).